The following is a 239-amino-acid chain: Orotidine 5'-phosphate decarboxylase (239 aa).

Substrate contacts are provided by residues Asp10, Lys32, 59–68 (DLKLHDIPNT), Thr122, Arg184, Gln193, Gly213, and Arg214. Lys61 serves as the catalytic Proton donor.

The protein belongs to the OMP decarboxylase family. Type 1 subfamily. As to quaternary structure, homodimer.

The catalysed reaction is orotidine 5'-phosphate + H(+) = UMP + CO2. The protein operates within pyrimidine metabolism; UMP biosynthesis via de novo pathway; UMP from orotate: step 2/2. Its function is as follows. Catalyzes the decarboxylation of orotidine 5'-monophosphate (OMP) to uridine 5'-monophosphate (UMP). This is Orotidine 5'-phosphate decarboxylase from Geobacillus sp. (strain WCH70).